The following is a 499-amino-acid chain: Argininosuccinate lyase (499 aa).

Positions 1–22 (MSDGEDHETANADDRDETVVRR) are disordered. A compositionally biased stretch (basic and acidic residues) spans 7 to 22 (HETANADDRDETVVRR).

It belongs to the lyase 1 family. Argininosuccinate lyase subfamily.

It is found in the cytoplasm. It carries out the reaction 2-(N(omega)-L-arginino)succinate = fumarate + L-arginine. Its pathway is amino-acid biosynthesis; L-arginine biosynthesis; L-arginine from L-ornithine and carbamoyl phosphate: step 3/3. This chain is Argininosuccinate lyase, found in Haloarcula marismortui (strain ATCC 43049 / DSM 3752 / JCM 8966 / VKM B-1809) (Halobacterium marismortui).